The primary structure comprises 388 residues: Diphosphomevalonate decarboxylase (388 aa).

(R)-5-diphosphomevalonate is bound by residues 19–22, Arg-74, 153–158, and Thr-209; these read YWGK and SGSACR. Residues 367 to 388 are disordered; it reads QGPQGSSESLINDKGLPKAVAN.

Belongs to the diphosphomevalonate decarboxylase family. In terms of assembly, homodimer.

The catalysed reaction is (R)-5-diphosphomevalonate + ATP = isopentenyl diphosphate + ADP + phosphate + CO2. It participates in isoprenoid biosynthesis; isopentenyl diphosphate biosynthesis via mevalonate pathway; isopentenyl diphosphate from (R)-mevalonate: step 3/3. Diphosphomevalonate decarboxylase; part of the second module of ergosterol biosynthesis pathway that includes the middle steps of the pathway. The second module is carried out in the vacuole and involves the formation of farnesyl diphosphate, which is also an important intermediate in the biosynthesis of ubiquinone, dolichol, heme and prenylated proteins. Activity by the mevalonate kinase ERG12 first converts mevalonate into 5-phosphomevalonate. 5-phosphomevalonate is then further converted to 5-diphosphomevalonate by the phosphomevalonate kinase ERG8. The diphosphomevalonate decarboxylase MVD1/ERG19 then produces isopentenyl diphosphate. The isopentenyl-diphosphate delta-isomerase IDI1 then catalyzes the 1,3-allylic rearrangement of the homoallylic substrate isopentenyl (IPP) to its highly electrophilic allylic isomer, dimethylallyl diphosphate (DMAPP). Finally the farnesyl diphosphate synthase ERG20 catalyzes the sequential condensation of isopentenyl pyrophosphate with dimethylallyl pyrophosphate, and then with the resultant geranylpyrophosphate to the ultimate product farnesyl pyrophosphate. This chain is Diphosphomevalonate decarboxylase, found in Debaryomyces hansenii (strain ATCC 36239 / CBS 767 / BCRC 21394 / JCM 1990 / NBRC 0083 / IGC 2968) (Yeast).